The sequence spans 2435 residues: ATP-binding cassette sub-family A member 2 (2435 aa).

Residue asparagine 14 is glycosylated (N-linked (GlcNAc...) asparagine). 2 helical membrane-spanning segments follow: residues 22 to 42 (PWVL…LLGL) and 54 to 74 (AFYT…QSLC). 3 N-linked (GlcNAc...) asparagine glycosylation sites follow: asparagine 89, asparagine 168, and asparagine 173. Position 271 is an N5-methylglutamine (glutamine 271). N-linked (GlcNAc...) asparagine glycosylation is found at asparagine 305, asparagine 368, asparagine 379, asparagine 420, asparagine 432, asparagine 476, asparagine 484, asparagine 494, asparagine 530, asparagine 544, asparagine 590, asparagine 600, and asparagine 628. 6 helical membrane-spanning segments follow: residues 699-719 (FLFV…VYSV), 750-770 (VAWF…LTAI), 782-802 (VVII…FCFL), 813-833 (ASAC…YVAI), 857-877 (AFGL…GIQW), and 893-913 (LLAV…TWYI). Residues 990-1221 (VCVDKLTKVY…YGDGYRLTLV (232 aa)) form the ABC transporter 1 domain. ATP is bound at residue 1024–1031 (GHNGAGKT). Disordered regions lie at residues 1223–1243 (RPAE…PGRA) and 1325–1357 (DQSL…GHAG). Serine 1238, serine 1327, and serine 1331 each carry phosphoserine. A compositionally biased stretch (basic and acidic residues) spans 1333-1342 (ADVKESRKDV). Residue asparagine 1408 is glycosylated (N-linked (GlcNAc...) asparagine). The chain crosses the membrane as a helical span at residues 1456-1476 (ALFSQILLPAFFVCVAMTVAL). 3 N-linked (GlcNAc...) asparagine glycosylation sites follow: asparagine 1496, asparagine 1549, and asparagine 1557. Residues 1586–1610 (SNFVPPPPSPAPSDSPASPDEDLQA) are disordered. The span at 1589 to 1598 (VPPPPSPAPS) shows a compositional bias: pro residues. Asparagine 1612, asparagine 1677, and asparagine 1775 each carry an N-linked (GlcNAc...) asparagine glycan. 5 consecutive transmembrane segments (helical) span residues 1792–1812 (VVIA…FVVF), 1841–1861 (VWDM…LFVF), 1872–1892 (FPAV…IMYP), 1905–1925 (VFLI…TFLL), and 1991–2011 (GLVA…MCQY). In terms of domain architecture, ABC transporter 2 spans 2050–2285 (VKIENLTKVY…FGDGYMITVR (236 aa)). Asparagine 2054 carries N-linked (GlcNAc...) asparagine glycosylation. 2087–2094 (GVNGAGKT) is an ATP binding site. Phosphothreonine is present on threonine 2412.

This sequence belongs to the ABC transporter superfamily. ABCA family. Post-translationally, methylated at Gln-271 by N6AMT1. As to expression, highly expressed in the brain,peripheral blood leukocytes and ovary, whereas lower levels of expression is observed in kidney and liver. In terms of tissue distribution, weakly expressed in brain and highly in peripheral blood leukocytes.

It is found in the endosome membrane. The protein localises to the lysosome membrane. Probable lipid transporter that modulates cholesterol sequestration in the late endosome/lysosome by regulating the intracellular sphingolipid metabolism, in turn participates in cholesterol homeostasis. May alter the transbilayer distribution of ceramide in the intraluminal membrane lipid bilayer, favoring its retention in the outer leaflet that results in increased acid ceramidase activity in the late endosome/lysosome, facilitating ceramide deacylation to sphingosine leading to the sequestration of free cholesterol in lysosomes. In addition regulates amyloid-beta production either by activating a signaling pathway that regulates amyloid precursor protein transcription through the modulation of sphingolipid metabolism or through its role in gamma-secretase processing of APP. May play a role in myelin formation. This is ATP-binding cassette sub-family A member 2 from Homo sapiens (Human).